The sequence spans 222 residues: Sortase A (222 aa).

Over 1–7 (MLKKTIA) the chain is Cytoplasmic. Residues 8 to 28 (IIILIIGLLLIFSPFIKNGIV) form a helical membrane-spanning segment. The Extracellular portion of the chain corresponds to 29–222 (KYMSGHETIE…ELENKYFPSK (194 aa)). His-127 functions as the Proton donor/acceptor in the catalytic mechanism. Cys-188 functions as the Acyl-thioester intermediate in the catalytic mechanism.

This sequence belongs to the bacterial sortase family. Class A subfamily.

It is found in the cell membrane. Activity is enhanced by Zn(2+) and strongly enhanced by Ca(2+). Inhibited by chalcone, a precursor of several flavonoids, which blocks the SrtA active site. Transpeptidase that anchors surface proteins to the cell wall. Recognizes and modifies its substrate by proteolytic cleavage of a C-terminal sorting signal. Following cleavage, a covalent intermediate is formed via a thioester bond between the sortase and its substrate, which is then transferred and covalently attached to the cell wall. This sortase recognizes a Leu-Pro-x-Thr-Gly (LPXTG) motif, which is cleaved by the sortase between the threonine and glycine residues. Involved in pathogenesis. May regulate the rate of synthesis and/or the stability of a subset of LPXTG proteins. Not involved in cell wall-anchoring of Hbp2 (SvpA) or Hbp1. The polypeptide is Sortase A (Listeria monocytogenes serovar 1/2a (strain ATCC BAA-679 / EGD-e)).